The chain runs to 514 residues: 2-isopropylmalate synthase (514 aa).

In terms of domain architecture, Pyruvate carboxyltransferase spans 5–267; sequence LIIFDTTLRD…HTDIETREIV (263 aa). The Mn(2+) site is built by Asp-14, His-202, His-204, and Asn-238. Residues 393–514 form a regulatory domain region; that stretch reads KLVALRVCSE…QRTHPQVGDV (122 aa).

It belongs to the alpha-IPM synthase/homocitrate synthase family. LeuA type 1 subfamily. In terms of assembly, homodimer. Mn(2+) is required as a cofactor.

Its subcellular location is the cytoplasm. It carries out the reaction 3-methyl-2-oxobutanoate + acetyl-CoA + H2O = (2S)-2-isopropylmalate + CoA + H(+). Its pathway is amino-acid biosynthesis; L-leucine biosynthesis; L-leucine from 3-methyl-2-oxobutanoate: step 1/4. Its function is as follows. Catalyzes the condensation of the acetyl group of acetyl-CoA with 3-methyl-2-oxobutanoate (2-ketoisovalerate) to form 3-carboxy-3-hydroxy-4-methylpentanoate (2-isopropylmalate). The chain is 2-isopropylmalate synthase from Methylococcus capsulatus (strain ATCC 33009 / NCIMB 11132 / Bath).